Consider the following 286-residue polypeptide: Transcription factor MYB62 (286 aa).

2 consecutive HTH myb-type domains span residues 16 to 68 (DEEL…LNYL) and 69 to 123 (KPDI…QKQA). 2 DNA-binding regions (H-T-H motif) span residues 44–68 (WNHV…LNYL) and 96–119 (WSKI…RTRV).

As to expression, expressed in leaves and flowers.

The protein resides in the nucleus. Its function is as follows. Transcription repressor of phosphate (Pi) starvation-induced genes. Negatively regulates Pi starvation responses via the repression of gibberellic acid (GA) biosynthesis and signaling. Modulates root architecture, phosphatase activity, and Pi uptake and accumulation. The protein is Transcription factor MYB62 of Arabidopsis thaliana (Mouse-ear cress).